The chain runs to 235 residues: Probable transcriptional regulatory protein Ccur92_05350 (235 aa).

It belongs to the TACO1 family.

It is found in the cytoplasm. The protein is Probable transcriptional regulatory protein Ccur92_05350 of Campylobacter curvus (strain 525.92).